We begin with the raw amino-acid sequence, 431 residues long: Ribonuclease TTHA0252 (431 aa).

Residues His-59, His-61, Asp-63, His-64, His-141, Asp-162, and His-400 each coordinate Zn(2+).

It belongs to the metallo-beta-lactamase superfamily. RNA-metabolizing metallo-beta-lactamase-like family. In terms of assembly, monomer. Requires Zn(2+) as cofactor.

Its subcellular location is the cytoplasm. Inhibited by cadmium, cobalt, manganese, magnesium, calcium and nickel ions. Has endoribonuclease activity towards 23S and 16S rRNA (in vitro). This Thermus thermophilus (strain ATCC 27634 / DSM 579 / HB8) protein is Ribonuclease TTHA0252.